A 497-amino-acid polypeptide reads, in one-letter code: Probable cytosol aminopeptidase (497 aa).

Positions 263 and 268 each coordinate Mn(2+). Residue Lys-275 is part of the active site. Asp-286, Asp-345, and Glu-347 together coordinate Mn(2+). Arg-349 is a catalytic residue.

This sequence belongs to the peptidase M17 family. Mn(2+) serves as cofactor.

It is found in the cytoplasm. The enzyme catalyses Release of an N-terminal amino acid, Xaa-|-Yaa-, in which Xaa is preferably Leu, but may be other amino acids including Pro although not Arg or Lys, and Yaa may be Pro. Amino acid amides and methyl esters are also readily hydrolyzed, but rates on arylamides are exceedingly low.. It catalyses the reaction Release of an N-terminal amino acid, preferentially leucine, but not glutamic or aspartic acids.. Functionally, presumably involved in the processing and regular turnover of intracellular proteins. Catalyzes the removal of unsubstituted N-terminal amino acids from various peptides. The protein is Probable cytosol aminopeptidase of Sinorhizobium fredii (strain NBRC 101917 / NGR234).